The following is a 342-amino-acid chain: MQFIDRAEIEVEGGKGGDGIVAFRREKYVPAGGPAGGNGGKGGSVIFVATQNLQTLLDFQYSRYFKADDGKRGGPNNCTGANGSDRIIKVPCGTVVYDLDSEEIIGDLVTPEQTLIVAAGGKGGLGNRHFLSNNNRAPEYALPGLEGEKRHLRLELKLLAEVGIIGLPNAGKSTLISAVSSARPKIADYPFTTLIPNLGVVRKPTGDGTVFADIPGLIEGAHLGIGLGHEFLRHIERTRLLIHLVSLTSEDPIADYQIIQGELAAYGRGLEKRSQILVFNKIDAVDEETIDNYQKQFAKITNAEILTISAVTGAGLTTLLAKVWQQLEQLERVEDETPSLFS.

An Obg domain is found at Met1–Leu159. The region spanning Ala160–Glu328 is the OBG-type G domain. Residues Gly166–Ser173, Phe191–Ile195, Asp213–Gly216, Asn280–Asp283, and Ser309–Val311 contribute to the GTP site. Mg(2+)-binding residues include Ser173 and Thr193.

It belongs to the TRAFAC class OBG-HflX-like GTPase superfamily. OBG GTPase family. As to quaternary structure, monomer. Requires Mg(2+) as cofactor.

The protein resides in the cytoplasm. Its function is as follows. An essential GTPase which binds GTP, GDP and possibly (p)ppGpp with moderate affinity, with high nucleotide exchange rates and a fairly low GTP hydrolysis rate. Plays a role in control of the cell cycle, stress response, ribosome biogenesis and in those bacteria that undergo differentiation, in morphogenesis control. This is GTPase Obg from Microcystis aeruginosa (strain NIES-843 / IAM M-2473).